The chain runs to 164 residues: MADYSFDIVSKVDTNLIEESISVALKEITNRYDFKDSNSSMELNTKDNEIKLSSADDFKVKSLYDILLTRLSKRGISLKNFQPGKIESALGGTAKQSVKIQQGIPADKAKEIVRIIKDAKIKVNASIQGDQLRVTSKSKDDLQATMALLKGKDLGLDLQFTNYR.

It belongs to the YajQ family.

Nucleotide-binding protein. This chain is Nucleotide-binding protein Emin_0136, found in Elusimicrobium minutum (strain Pei191).